Consider the following 410-residue polypeptide: MKVYLVGGAVRDRLLGIPVQEQDWVVVGATPEELLKRKYRQVGRDFPVFLHPETKEEYALARTERKSAPGYYGFICDFSESVTLEEDLARRDLTINAMAMDEQGNLIDPYQGQRDLEEKLLRHVSPAFAEDPVRVLRVARFASRFHHLGFKIANETRLLMYSMVKQGELAHLIPERVWQEWQKSLQEKNPEQFILSLRSCDALRVVLPEINSLFGVPNPHQYHQEIDTGIHSLMALRASSELSEEPLVRFAALVHDLGKASTPIQDWPKHHGHEEEGTKLIRALCARLRIPNDYRDLAVTVARAHLNIHRVCELRPNTIVKLLEQVDAFRRPQLFHKILIACQADAESCGKTVVYRQTQLWNEILSECVKVTPQTFIVQGYEGKAIKEAMHQSRVACVERIMTSWKSNEK.

ATP-binding residues include Gly-8 and Arg-11. CTP is bound by residues Gly-8 and Arg-11. Mg(2+) contacts are provided by Glu-21 and Asp-23. Positions 91, 137, and 140 each coordinate ATP. Positions 91, 137, and 140 each coordinate CTP. The HD domain maps to 228–329 (TGIHSLMALR…VKLLEQVDAF (102 aa)).

It belongs to the tRNA nucleotidyltransferase/poly(A) polymerase family. Bacterial CCA-adding enzyme type 1 subfamily. Monomer. Can also form homodimers and oligomers. Mg(2+) serves as cofactor. Requires Ni(2+) as cofactor.

It carries out the reaction a tRNA precursor + 2 CTP + ATP = a tRNA with a 3' CCA end + 3 diphosphate. It catalyses the reaction a tRNA with a 3' CCA end + 2 CTP + ATP = a tRNA with a 3' CCACCA end + 3 diphosphate. Its function is as follows. Catalyzes the addition and repair of the essential 3'-terminal CCA sequence in tRNAs without using a nucleic acid template. Adds these three nucleotides in the order of C, C, and A to the tRNA nucleotide-73, using CTP and ATP as substrates and producing inorganic pyrophosphate. tRNA 3'-terminal CCA addition is required both for tRNA processing and repair. Also involved in tRNA surveillance by mediating tandem CCA addition to generate a CCACCA at the 3' terminus of unstable tRNAs. While stable tRNAs receive only 3'-terminal CCA, unstable tRNAs are marked with CCACCA and rapidly degraded. The polypeptide is Multifunctional CCA protein (Legionella pneumophila (strain Paris)).